The chain runs to 402 residues: Arginine deiminase (402 aa).

The Amidino-cysteine intermediate role is filled by Cys-391.

Belongs to the arginine deiminase family.

The protein localises to the cytoplasm. It catalyses the reaction L-arginine + H2O = L-citrulline + NH4(+). It participates in amino-acid degradation; L-arginine degradation via ADI pathway; carbamoyl phosphate from L-arginine: step 1/2. The chain is Arginine deiminase from Mycobacterium marinum (strain ATCC BAA-535 / M).